Consider the following 1003-residue polypeptide: Methyl-CpG-binding domain protein 6 (1003 aa).

In terms of domain architecture, MBD spans 11–81; it reads DRAGGPVATS…KVFNFDPLAP (71 aa). The tract at residues 57–68 is required for interaction with ASXL1/2/3; it reads DGTCKCGLECPL. 3 disordered regions span residues 120 to 219, 238 to 664, and 683 to 1003; these read TCSH…PPPA, VPSD…PLLF, and ATLD…KLAP. 2 stretches are compositionally biased toward pro residues: residues 140–155 and 268–287; these read PGPPSARPPCRVPPTT and TPPPLPPSNNLPAHPGPASQ. 3 stretches are compositionally biased toward low complexity: residues 297–308, 319–328, and 348–361; these read LPLVLGPLGGAP, LASSLLSAAA, and AQAPSASHSSSLRP. Over residues 391 to 407 the composition is skewed to pro residues; sequence APAPVPQPFSLPEPSQP. Over residues 408–426 the composition is skewed to low complexity; the sequence is ILPSVLSLLGLPTPGPSHS. Pro residues predominate over residues 439–456; that stretch reads LPPPPTLSSGSPPQPRHP. 2 stretches are compositionally biased toward low complexity: residues 460–498 and 531–548; these read SLPGTTSGSLSSVPGAPAPPAASKAPVVPSPVLQSPSEG and GAGFPGMLGALPLPLSLG. Pro residues predominate over residues 570-589; that stretch reads QPPPEPLLPPPGGPGPPLAP. The span at 590–602 shows a compositional bias: low complexity; the sequence is GEPEGPSLLVASL. A compositionally biased stretch (pro residues) spans 603–617; it reads LPPPPSDLLPPPSAP. A compositionally biased stretch (low complexity) spans 618-633; sequence PSNLLASFLPLLALGP. The segment covering 635-649 has biased composition (gly residues); sequence AGDGEGSAEGAGGPS. A compositionally biased stretch (low complexity) spans 650–662; that stretch reads GEPFSGLGDLSPL. Residues 707–718 show a composition bias toward polar residues; the sequence is TSSVTTATTDPG. Low complexity-rich tracts occupy residues 732–761, 768–778, and 788–798; these read PPQLLSPLLGASLLGDLSSLTSSPGALPSL, LLSGQLGLQLL, and SEASSPLACLL. Over residues 805-817 the composition is skewed to pro residues; it reads PEQPEAPCLPPES. The segment covering 818-837 has biased composition (low complexity); that stretch reads PASALEPEPARPPLSALAPP. Residues 947–958 show a composition bias toward basic residues; the sequence is RKSRRGRRRKYN. A compositionally biased stretch (polar residues) spans 959–969; the sequence is PTRNSNSSRQD. Residues 989–1003 show a composition bias toward basic residues; sequence RPGRPAKNKRRKLAP.

As to quaternary structure, core component of the polycomb repressive deubiquitinase (PR-DUB) complex, at least composed of BAP1, one of ASXL1, ASXL2 or (probably) ASXL3, and one of MBD5 or MBD6. Distinct combinations of ASXL and MBD proteins may preferentially bind specific histone modification marks. The PR-DUB core associates with a number of accessory proteins, including FOXK1, FOXK2, KDM1B, HCFC1 and OGT; KDM1B specifically associates with ASXL2 PR-DUB complexes. Interacts (via MBD domain) with ASXL1, ASXL2 and ASXL3 (via PHD domain); the interaction is probably direct, mediates association with other PR-DUB complex core components.

Its subcellular location is the nucleus. The protein resides in the chromosome. Non-catalytic component of the polycomb repressive deubiquitinase (PR-DUB) complex, a complex that specifically mediates deubiquitination of histone H2A monoubiquitinated at 'Lys-120' (H2AK119ub1). Important for stability of PR-DUB components and stimulating its ubiquitinase activity. As part of the PR-DUB complex, associates with chromatin enriched in histone marks H3K4me1, H3K4me3, and H3K27Ac, but not in H3K27me3. MBD5 and MBD6 containing complexes associate with distinct chromatin regions enriched in genes involved in different pathways. Heterochromatin recruitment is not mediated by DNA methylation. The PR-DUB complex is an epigenetic regulator of gene expression, including genes involved in development, cell communication, signaling, cell proliferation and cell viability; may promote cancer cell growth. The protein is Methyl-CpG-binding domain protein 6 (MBD6) of Homo sapiens (Human).